We begin with the raw amino-acid sequence, 427 residues long: Peptidase B (427 aa).

The Mn(2+) site is built by K195 and D200. K207 is an active-site residue. Mn(2+) contacts are provided by D218, D277, and E279. Residue R281 is part of the active site.

This sequence belongs to the peptidase M17 family. As to quaternary structure, homohexamer. Mn(2+) is required as a cofactor.

The protein resides in the cytoplasm. The catalysed reaction is Release of an N-terminal amino acid, Xaa, from a peptide or arylamide. Xaa is preferably Glu or Asp but may be other amino acids, including Leu, Met, His, Cys and Gln.. Its function is as follows. Probably plays an important role in intracellular peptide degradation. The chain is Peptidase B from Escherichia fergusonii (strain ATCC 35469 / DSM 13698 / CCUG 18766 / IAM 14443 / JCM 21226 / LMG 7866 / NBRC 102419 / NCTC 12128 / CDC 0568-73).